Reading from the N-terminus, the 118-residue chain is Large ribosomal subunit protein bL20c (118 aa).

It belongs to the bacterial ribosomal protein bL20 family.

It is found in the plastid. In terms of biological role, binds directly to 23S ribosomal RNA and is necessary for the in vitro assembly process of the 50S ribosomal subunit. It is not involved in the protein synthesizing functions of that subunit. In Cuscuta reflexa (Southern Asian dodder), this protein is Large ribosomal subunit protein bL20c (rpl20).